A 414-amino-acid polypeptide reads, in one-letter code: Isocitrate dehydrogenase [NADP] cytoplasmic (414 aa).

Serine 2 carries the N-acetylserine modification. Phosphotyrosine is present on tyrosine 42. Residue 75 to 77 coordinates NADP(+); the sequence is TIT. Threonine 77 contacts substrate. Lysine 81 bears the N6-acetyllysine mark. Arginine 82 is a binding site for NADP(+). Substrate-binding positions include 94 to 100 and arginine 109; that span reads SPNGTIR. An N6-succinyllysine modification is found at lysine 126. Residues arginine 132 and lysine 212 each contribute to the substrate site. Lysine 224, lysine 233, and lysine 243 each carry N6-acetyllysine. Residue aspartate 252 coordinates Mn(2+). Lysine 260 contributes to the NADP(+) binding site. Mn(2+) is bound by residues aspartate 275 and aspartate 279. Residue 310-315 coordinates NADP(+); that stretch reads GTVTRH. An N6-acetyllysine modification is found at lysine 321. Residue asparagine 328 participates in NADP(+) binding. Serine 389 carries the phosphoserine modification. Residue lysine 400 is modified to N6-succinyllysine.

This sequence belongs to the isocitrate and isopropylmalate dehydrogenases family. Homodimer. Mg(2+) serves as cofactor. Mn(2+) is required as a cofactor. Acetylation at Lys-374 dramatically reduces catalytic activity.

Its subcellular location is the cytoplasm. It is found in the cytosol. The catalysed reaction is D-threo-isocitrate + NADP(+) = 2-oxoglutarate + CO2 + NADPH. In terms of biological role, catalyzes the NADP(+)-dependent oxidative decarboxylation of isocitrate (D-threo-isocitrate) to 2-ketoglutarate (2-oxoglutarate), which is required by other enzymes such as the phytanoyl-CoA dioxygenase. Plays a critical role in the generation of NADPH, an important cofactor in many biosynthesis pathways. May act as a corneal epithelial crystallin and may be involved in maintaining corneal epithelial transparency. This chain is Isocitrate dehydrogenase [NADP] cytoplasmic (IDH1), found in Microtus ochrogaster (Prairie vole).